The chain runs to 222 residues: uncharacterized protein (222 aa).

The signal sequence occupies residues 1–20 (MRTTSFAKVAALCGLLALSG). Cys-21 carries N-palmitoyl cysteine lipidation. The S-diacylglycerol cysteine moiety is linked to residue Cys-21.

The protein resides in the cell membrane. This is an uncharacterized protein from Escherichia coli O157:H7.